The following is a 213-amino-acid chain: NADH-quinone oxidoreductase subunit B 1 (213 aa).

[4Fe-4S] cluster-binding residues include C82, C83, C148, and C177.

The protein belongs to the complex I 20 kDa subunit family. In terms of assembly, NDH-1 is composed of 14 different subunits. Subunits NuoB, C, D, E, F, and G constitute the peripheral sector of the complex. [4Fe-4S] cluster is required as a cofactor.

The protein resides in the cell inner membrane. The catalysed reaction is a quinone + NADH + 5 H(+)(in) = a quinol + NAD(+) + 4 H(+)(out). Its function is as follows. NDH-1 shuttles electrons from NADH, via FMN and iron-sulfur (Fe-S) centers, to quinones in the respiratory chain. The immediate electron acceptor for the enzyme in this species is believed to be ubiquinone. Couples the redox reaction to proton translocation (for every two electrons transferred, four hydrogen ions are translocated across the cytoplasmic membrane), and thus conserves the redox energy in a proton gradient. This Koribacter versatilis (strain Ellin345) protein is NADH-quinone oxidoreductase subunit B 1.